The chain runs to 216 residues: Cytidylate kinase (216 aa).

11 to 19 (GPAGAGKGT) serves as a coordination point for ATP.

Belongs to the cytidylate kinase family. Type 1 subfamily.

Its subcellular location is the cytoplasm. It catalyses the reaction CMP + ATP = CDP + ADP. The catalysed reaction is dCMP + ATP = dCDP + ADP. In Mesorhizobium japonicum (strain LMG 29417 / CECT 9101 / MAFF 303099) (Mesorhizobium loti (strain MAFF 303099)), this protein is Cytidylate kinase.